Consider the following 429-residue polypeptide: Serum response factor-binding protein 1 (429 aa).

At Ala-2 the chain carries N-acetylalanine. Coiled-coil stretches lie at residues 42–67 (KGTE…AMKE) and 108–144 (LLKK…EDNH). Polar residues-rich tracts occupy residues 128–138 (QNVTEVESSKN) and 146–160 (KNTL…NLQR). Disordered regions lie at residues 128–285 (QNVT…GDDF) and 311–429 (EKVF…TFDD). Over residues 183-195 (NSKEKIAKMEHGP) the composition is skewed to basic and acidic residues. A Glycyl lysine isopeptide (Lys-Gly) (interchain with G-Cter in SUMO2) cross-link involves residue Lys-190. Phosphoserine occurs at positions 203, 205, 264, 279, and 281. Residues 249-265 (GGEELCEEEKEYFDDST) show a composition bias toward acidic residues. The span at 311 to 341 (EKVFLKEDTGETHGDTRNDKTKPSTETRKLE) shows a compositional bias: basic and acidic residues. Residue Lys-316 forms a Glycyl lysine isopeptide (Lys-Gly) (interchain with G-Cter in SUMO2) linkage. Phosphoserine occurs at positions 349, 351, and 367. Residues 357–367 (NFKEQAPKTRS) show a composition bias toward basic and acidic residues. Residues 373–383 (NEPQFKNQFNK) show a composition bias toward polar residues.

In terms of assembly, interacts with SRF. Forms complexes with SRF and SRF cofactors ARID2, MYOCD and NKX2-5. Interacts with the N-terminus of SLC2A4.

It is found in the cytoplasm. The protein resides in the perinuclear region. Functionally, may be involved in regulating transcriptional activation of cardiac genes during the aging process. May play a role in biosynthesis and/or processing of SLC2A4 in adipose cells. This is Serum response factor-binding protein 1 from Pongo abelii (Sumatran orangutan).